Reading from the N-terminus, the 403-residue chain is Phosphopentomutase (403 aa).

Residues Asp13, Asp298, His303, Asp339, His340, and His351 each coordinate Mn(2+).

Belongs to the phosphopentomutase family. Mn(2+) serves as cofactor.

It localises to the cytoplasm. The enzyme catalyses 2-deoxy-alpha-D-ribose 1-phosphate = 2-deoxy-D-ribose 5-phosphate. It catalyses the reaction alpha-D-ribose 1-phosphate = D-ribose 5-phosphate. It functions in the pathway carbohydrate degradation; 2-deoxy-D-ribose 1-phosphate degradation; D-glyceraldehyde 3-phosphate and acetaldehyde from 2-deoxy-alpha-D-ribose 1-phosphate: step 1/2. Functionally, isomerase that catalyzes the conversion of deoxy-ribose 1-phosphate (dRib-1-P) and ribose 1-phosphate (Rib-1-P) to deoxy-ribose 5-phosphate (dRib-5-P) and ribose 5-phosphate (Rib-5-P), respectively. This chain is Phosphopentomutase, found in Streptococcus pyogenes serotype M3 (strain ATCC BAA-595 / MGAS315).